Here is a 443-residue protein sequence, read N- to C-terminus: ATP-dependent protease ATPase subunit HslU (443 aa).

Residues Ile-18, 60–65 (GVGKTE), Asp-256, Glu-321, and Arg-393 contribute to the ATP site.

It belongs to the ClpX chaperone family. HslU subfamily. As to quaternary structure, a double ring-shaped homohexamer of HslV is capped on each side by a ring-shaped HslU homohexamer. The assembly of the HslU/HslV complex is dependent on binding of ATP.

It is found in the cytoplasm. Its function is as follows. ATPase subunit of a proteasome-like degradation complex; this subunit has chaperone activity. The binding of ATP and its subsequent hydrolysis by HslU are essential for unfolding of protein substrates subsequently hydrolyzed by HslV. HslU recognizes the N-terminal part of its protein substrates and unfolds these before they are guided to HslV for hydrolysis. In Vibrio cholerae serotype O1 (strain ATCC 39315 / El Tor Inaba N16961), this protein is ATP-dependent protease ATPase subunit HslU.